Reading from the N-terminus, the 139-residue chain is MSSAGVPHTDLWPLLLYFELVLVVVGTMLALPPFLGERRTRRTPATEQPYESGIVAVGSSQLRFSVRFYLIAIFFVIFDLEAVFIFAWAIAFRESGWPGYIEILIFIGVLVATLVYLWRIGALDWRTPRQRSIEATIHQ.

The next 3 helical transmembrane spans lie at 11–31, 70–90, and 97–117; these read LWPL…MLAL, LIAI…AWAI, and WPGY…LVYL.

This sequence belongs to the complex I subunit 3 family. As to quaternary structure, NDH-1 is composed of 14 different subunits. Subunits NuoA, H, J, K, L, M, N constitute the membrane sector of the complex.

Its subcellular location is the cell inner membrane. It catalyses the reaction a quinone + NADH + 5 H(+)(in) = a quinol + NAD(+) + 4 H(+)(out). In terms of biological role, NDH-1 shuttles electrons from NADH, via FMN and iron-sulfur (Fe-S) centers, to quinones in the respiratory chain. The immediate electron acceptor for the enzyme in this species is believed to be ubiquinone. Couples the redox reaction to proton translocation (for every two electrons transferred, four hydrogen ions are translocated across the cytoplasmic membrane), and thus conserves the redox energy in a proton gradient. This chain is NADH-quinone oxidoreductase subunit A, found in Methylococcus capsulatus (strain ATCC 33009 / NCIMB 11132 / Bath).